The following is a 194-amino-acid chain: Large ribosomal subunit protein eL15 (194 aa).

The segment covering 162 to 173 (KTSAGRRARGLH) has biased composition (basic residues). The disordered stretch occupies residues 162–194 (KTSAGRRARGLHNRGTGTEKCRPSLTSHKNQGK). Over residues 185 to 194 (SLTSHKNQGK) the composition is skewed to polar residues.

Belongs to the eukaryotic ribosomal protein eL15 family.

The sequence is that of Large ribosomal subunit protein eL15 from Methanocorpusculum labreanum (strain ATCC 43576 / DSM 4855 / Z).